A 489-amino-acid polypeptide reads, in one-letter code: 5'-AMP-activated protein kinase subunit gamma-3 (489 aa).

Positions 1–113 are disordered; the sequence is MEPGLEHALR…PAGVGTPPTG (113 aa). Positions 34 to 46 are enriched in low complexity; that stretch reads SSSWPSPAVTSSS. Residues 50 to 62 are compositionally biased toward basic residues; the sequence is RGKRRAKALRWTR. CBS domains lie at 197 to 258, 280 to 340, and 355 to 415; these read MATS…RSPL, CFKP…LLPR, and TFRD…HLDM. ADP-binding positions include Arg225, 240–245, Val285, 306–307, and Lys325; these read MLTITD and HR. AMP contacts are provided by residues Arg225, 240–245, Val285, His306, 306–307, Lys325, Thr355, Ala360, 381–382, 397–400, Arg424, Leu432, His453, 453–454, and 469–472; these read MLTITD, HR, SA, SRFD, and SLSD. ATP contacts are provided by residues Arg225, 240–245, Val285, 306–307, Arg307, and Lys325; these read MLTITD and HR. The AMPK pseudosubstrate signature appears at 293-314; the sequence is LFEAVYTLIKNRIHRLPVLDPV. Residues 397–400, Arg424, Leu432, and 453–454 contribute to the ADP site; these read SRFD and HR. Residues 397-400, Arg424, Leu432, and 453-454 each bind ATP; these read SRFD and HR. Residues 427 to 486 enclose the CBS 4 domain; the sequence is CLEGVLSCQPHESLGEVIDRIAREQVHRLVLVDETQHLLGVVSLSDILQALVLSPAGIDA.

The protein belongs to the 5'-AMP-activated protein kinase gamma subunit family. AMPK is a heterotrimer of an alpha catalytic subunit (PRKAA1 or PRKAA2), a beta (PRKAB1 or PRKAB2) and a gamma non-catalytic subunits (PRKAG1, PRKAG2 or PRKAG3). Interacts with FNIP1 and FNIP2. Phosphorylated by ULK1; leading to negatively regulate AMPK activity and suggesting the existence of a regulatory feedback loop between ULK1 and AMPK. In terms of processing, glycosylated; O-GlcNAcylated by OGT, promoting the AMP-activated protein kinase (AMPK) activity. Skeletal muscle, with weak expression in heart and pancreas.

Its function is as follows. AMP/ATP-binding subunit of AMP-activated protein kinase (AMPK), an energy sensor protein kinase that plays a key role in regulating cellular energy metabolism. In response to reduction of intracellular ATP levels, AMPK activates energy-producing pathways and inhibits energy-consuming processes: inhibits protein, carbohydrate and lipid biosynthesis, as well as cell growth and proliferation. AMPK acts via direct phosphorylation of metabolic enzymes, and by longer-term effects via phosphorylation of transcription regulators. AMPK also acts as a regulator of cellular polarity by remodeling the actin cytoskeleton; probably by indirectly activating myosin. The AMPK gamma3 subunit is a non-catalytic subunit with a regulatory role in muscle energy metabolism. It mediates binding to AMP, ADP and ATP, leading to AMPK activation or inhibition: AMP-binding results in allosteric activation of alpha catalytic subunit (PRKAA1 or PRKAA2) both by inducing phosphorylation and preventing dephosphorylation of catalytic subunits. ADP also stimulates phosphorylation, without stimulating already phosphorylated catalytic subunit. ATP promotes dephosphorylation of catalytic subunit, rendering the AMPK enzyme inactive. In Homo sapiens (Human), this protein is 5'-AMP-activated protein kinase subunit gamma-3 (PRKAG3).